The chain runs to 246 residues: Large ribosomal subunit protein uL2 (246 aa).

Positions 197-226 are disordered; sequence SPYAHPHGGGSHPKGGTPVPKTAPPGQKVG.

The protein belongs to the universal ribosomal protein uL2 family. In terms of assembly, part of the 50S ribosomal subunit. Forms a bridge to the 30S subunit in the 70S ribosome.

Functionally, one of the primary rRNA binding proteins. Required for association of the 30S and 50S subunits to form the 70S ribosome, for tRNA binding and peptide bond formation. It has been suggested to have peptidyltransferase activity; this is somewhat controversial. Makes several contacts with the 16S rRNA in the 70S ribosome. The chain is Large ribosomal subunit protein uL2 from Pyrobaculum islandicum (strain DSM 4184 / JCM 9189 / GEO3).